Here is a 491-residue protein sequence, read N- to C-terminus: E3 ubiquitin-protein ligase Hakai (491 aa).

The tract at residues 1–61 is disordered; it reads MDHTDNELQG…PAKAPPGDEE (61 aa). The segment at 109–149 adopts an RING-type zinc-finger fold; sequence CDKCGLPIKIYGRMIPCKHVFCYDCAILHEKKGDKMCPGCS. An HYB domain region spans residues 148 to 206; it reads CSDPVQRIEQCTRGSLFMCSIVQGCKRTYLSQRDLQAHINHRHMRAGKPVTRASLENVH. A C2H2-type zinc finger spans residues 164 to 190; the sequence is FMCSIVQGCKRTYLSQRDLQAHINHRH. Ser201, Ser285, and Ser290 each carry phosphoserine. The interval 255-491 is disordered; it reads QPHEDIRAPP…DQTRYRPYYQ (237 aa). Composition is skewed to pro residues over residues 342-359, 372-389, and 399-423; these read APPP…PHPP, APPP…PPPG, and MNHP…PPHH. The segment covering 427–442 has biased composition (polar residues); that stretch reads NSLPQFTEDQGTLSPP. The span at 457–478 shows a compositional bias: pro residues; sequence PRGPPPPPRLQGPPSQTPLPGP.

Belongs to the Hakai family. As to quaternary structure, homodimer. Interacts with tyrosine-phosphorylated SRC substrates. Component of the WMM complex, a N6-methyltransferase complex composed of a catalytic subcomplex, named MAC, and of an associated subcomplex, named MACOM. The MAC subcomplex is composed of METTL3 and METTL14. The MACOM subcomplex is composed of WTAP, ZC3H13, CBLL1/HAKAI, VIRMA, and, in some cases of RBM15 (RBM15 or RBM15B). Also a component of a MACOM-like complex, named WTAP complex, composed of WTAP, ZC3H13, CBLL1, VIRMA, RBM15, BCLAF1 and THRAP3. Post-translationally, phosphorylated on tyrosine residues.

It localises to the nucleus speckle. It is found in the nucleus. The protein localises to the nucleoplasm. The protein resides in the cytoplasm. It carries out the reaction S-ubiquitinyl-[E2 ubiquitin-conjugating enzyme]-L-cysteine + [acceptor protein]-L-lysine = [E2 ubiquitin-conjugating enzyme]-L-cysteine + N(6)-ubiquitinyl-[acceptor protein]-L-lysine.. It functions in the pathway protein modification; protein ubiquitination. Functionally, E3 ubiquitin-protein ligase that mediates ubiquitination of several tyrosine-phosphorylated Src substrates, including CDH1, CTTN and DOK1. Targets CDH1 for endocytosis and degradation. Associated component of the WMM complex, a complex that mediates N6-methyladenosine (m6A) methylation of RNAs, a modification that plays a role in the efficiency of mRNA splicing and RNA processing. Its function in the WMM complex is unknown. This is E3 ubiquitin-protein ligase Hakai from Homo sapiens (Human).